The primary structure comprises 335 residues: Glyceraldehyde-3-phosphate dehydrogenase (335 aa).

NAD(+) contacts are provided by residues 12-13 (RI), D34, and R79. D-glyceraldehyde 3-phosphate contacts are provided by residues 150 to 152 (SCT), T181, 210 to 211 (TG), and R233. C151 acts as the Nucleophile in catalysis. N315 is an NAD(+) binding site.

The protein belongs to the glyceraldehyde-3-phosphate dehydrogenase family. In terms of assembly, homotetramer.

The protein localises to the cytoplasm. It catalyses the reaction D-glyceraldehyde 3-phosphate + phosphate + NAD(+) = (2R)-3-phospho-glyceroyl phosphate + NADH + H(+). The protein operates within carbohydrate degradation; glycolysis; pyruvate from D-glyceraldehyde 3-phosphate: step 1/5. This Ogataea parapolymorpha (strain ATCC 26012 / BCRC 20466 / JCM 22074 / NRRL Y-7560 / DL-1) (Yeast) protein is Glyceraldehyde-3-phosphate dehydrogenase (GPD).